The following is a 2345-amino-acid chain: Acetyl-CoA carboxylase 1 (2345 aa).

Met1 is subject to N-acetylmethionine. Residues Ser5, Ser23, Ser25, Ser29, Ser34, Ser47, Ser49, and Ser52 each carry the phosphoserine modification. Thr57 carries the phosphothreonine modification. Ser77 and Ser79 each carry phosphoserine. A Phosphoserine; by AMPK modification is found at Ser79. Positions 116–617 constitute a Biotin carboxylation domain; that stretch reads VIEKVLIANN…DTGWLDRLIA (502 aa). One can recognise an ATP-grasp domain in the interval 274 to 465; sequence SKRILNVPQD…LPAAQLQIAM (192 aa). An ATP-binding site is contributed by 300 to 357; it reads AEEVGYPVMIKASEGGGGKGIRKVNNADDFPNLFRQVQAEVPGSPIFVMRLAKQSRHL. Residues Glu423, Glu436, and Asn438 each coordinate Mg(2+). Residues Glu423, Glu436, and Asn438 each coordinate Mn(2+). Arg440 is a catalytic residue. Thr609 carries the post-translational modification Phosphothreonine. Residues 744 to 818 enclose the Biotinyl-binding domain; that stretch reads FEKENDPSVM…DPGCVIAKMQ (75 aa). Lys785 bears the N6-biotinyllysine mark. Phosphoserine occurs at positions 834, 1200, 1215, and 1217. At Thr1226 the chain carries Phosphothreonine. Phosphoserine occurs at positions 1258, 1262, and 1272. Lys1333 is modified (N6-acetyllysine). The region spanning 1575–1913 is the CoA carboxyltransferase N-terminal domain; it reads PYVTKDLLQS…SVHSSVPLLN (339 aa). A carboxyltransferase region spans residues 1575–2233; the sequence is PYVTKDLLQS…EDLVKKKIHN (659 aa). 3 residues coordinate CoA: Arg1822, Lys2126, and Arg2128. Positions 1917–2233 constitute a CoA carboxyltransferase C-terminal domain; that stretch reads PIDRIIEFVP…EDLVKKKIHN (317 aa). Thr2152 carries the post-translational modification Phosphothreonine.

As to quaternary structure, monomer, homodimer, and homotetramer. Can form filamentous polymers. Interacts in its inactive phosphorylated form with the BRCT domains of BRCA1 which prevents ACACA dephosphorylation and inhibits lipid synthesis. Interacts with MID1IP1; interaction with MID1IP1 promotes oligomerization and increases its activity. Mg(2+) is required as a cofactor. Requires Mn(2+) as cofactor. The cofactor is biotin. Phosphorylation on Ser-1262 is required for interaction with BRCA1. In terms of processing, phosphorylation at Ser-79 by AMPK inactivates enzyme activity. Post-translationally, the biotin cofactor is covalently attached to the central biotinyl-binding domain and is required for the catalytic activity.

It localises to the cytoplasm. The protein resides in the cytosol. It catalyses the reaction hydrogencarbonate + acetyl-CoA + ATP = malonyl-CoA + ADP + phosphate + H(+). The protein operates within lipid metabolism; malonyl-CoA biosynthesis; malonyl-CoA from acetyl-CoA: step 1/1. Inhibited by phosphorylation. Citrate promotes oligomerization of the protein into filaments that correspond to the most active form of the carboxylase. Functionally, cytosolic enzyme that catalyzes the carboxylation of acetyl-CoA to malonyl-CoA, the first and rate-limiting step of de novo fatty acid biosynthesis. This is a 2 steps reaction starting with the ATP-dependent carboxylation of the biotin carried by the biotin carboxyl carrier (BCC) domain followed by the transfer of the carboxyl group from carboxylated biotin to acetyl-CoA. This is Acetyl-CoA carboxylase 1 from Mus musculus (Mouse).